The sequence spans 154 residues: MRLKLLWVGKTQESWVRTGIEEYAGRIRRYLPLEILEAREEKGAQAAAMRERECERLAKLIPKGGRLVLLDERGEAMTSPELASFLSKNRDQGTQDLVFAIGGAYGFTDQFRSQAFKSISLSRMTLTHQMVRVFLLEQIYRGFTIINCEPYHHE.

S-adenosyl-L-methionine is bound by residues L70, G102, and 121-126; that span reads LSRMTL.

Belongs to the RNA methyltransferase RlmH family. In terms of assembly, homodimer.

It localises to the cytoplasm. The catalysed reaction is pseudouridine(1915) in 23S rRNA + S-adenosyl-L-methionine = N(3)-methylpseudouridine(1915) in 23S rRNA + S-adenosyl-L-homocysteine + H(+). Specifically methylates the pseudouridine at position 1915 (m3Psi1915) in 23S rRNA. The polypeptide is Ribosomal RNA large subunit methyltransferase H (Citrifermentans bemidjiense (strain ATCC BAA-1014 / DSM 16622 / JCM 12645 / Bem) (Geobacter bemidjiensis)).